We begin with the raw amino-acid sequence, 215 residues long: Tricarboxylate transporter ALT9 (215 aa).

Solcar repeat units lie at residues 18 to 106 (TTVV…LAPM) and 111 to 197 (CGVS…VVRL). Helical transmembrane passes span 19–39 (TVVG…VLVL), 112–132 (GVST…YCTM), and 182–202 (VAGA…GFLV).

Belongs to the mitochondrial carrier (TC 2.A.29) family.

The protein resides in the mitochondrion inner membrane. It functions in the pathway mycotoxin biosynthesis. Its function is as follows. Tricarboxylate transporter; part of the gene cluster that mediates the biosynthesis of the host-selective toxins (HSTs) AAL-toxins, sphinganine-analog mycotoxins responsible for Alternaria stem canker on tomato by the tomato pathotype. The biosynthesis starts with the polyketide synthase ALT1-catalyzed C-16 carbon chain assembly from one starter acetyl-CoA unit with malonyl-CoA extender units. ALT1 also selectively transfers methyl groups at the first and the third cycle of chain elongation for AAL toxin. The C-16 polyketide chain is released from the enzyme by a nucleophilic attack of a carbanion, which is derived from R-carbon of glycin by decarboxylation, on the carbonyl carbon of polyketide acyl chain. This step is probably catalyzed by a pyridoxal 5'-phosphate-dependent aminoacyl transferase ALT4. The respective functions of the other enzymes encoded by the cluster have still to be elucidated. The sphingosine N-acyltransferase-like protein ALT7 seems not to act as a resistance/self-tolerance factor against the toxin in the toxin biosynthetic gene cluster, contrary to what is expected. The polypeptide is Tricarboxylate transporter ALT9 (Alternaria alternata (Alternaria rot fungus)).